The sequence spans 448 residues: Signal recognition particle protein (448 aa).

GTP-binding positions include Gly101–Thr108, Asp182–Arg186, and Ser240–Asp243.

It belongs to the GTP-binding SRP family. SRP54 subfamily. Part of the signal recognition particle protein translocation system, which is composed of SRP and FtsY. SRP is a ribonucleoprotein composed of Ffh and a 4.5S RNA molecule.

It localises to the cytoplasm. The enzyme catalyses GTP + H2O = GDP + phosphate + H(+). Its function is as follows. Involved in targeting and insertion of nascent membrane proteins into the cytoplasmic membrane. Binds to the hydrophobic signal sequence of the ribosome-nascent chain (RNC) as it emerges from the ribosomes. The SRP-RNC complex is then targeted to the cytoplasmic membrane where it interacts with the SRP receptor FtsY. Interaction with FtsY leads to the transfer of the RNC complex to the Sec translocase for insertion into the membrane, the hydrolysis of GTP by both Ffh and FtsY, and the dissociation of the SRP-FtsY complex into the individual components. The polypeptide is Signal recognition particle protein (Helicobacter pylori (strain J99 / ATCC 700824) (Campylobacter pylori J99)).